Reading from the N-terminus, the 1097-residue chain is Apolipoprotein B receptor (1097 aa).

Disordered stretches follow at residues 64 to 249 (QEDL…KGEE), 262 to 376 (AWGT…WTTS), 410 to 739 (EEEG…SRRG), 789 to 866 (GWDS…ARAE), and 889 to 1097 (VGWQ…PKPQ). Composition is skewed to basic and acidic residues over residues 83–92 (GPGDDRRHEV), 158–177 (ERQESHEQEVNREERLRSWE), and 185–208 (VRAREPGMARGAESEWTWHGETEG). Over residues 209-218 (KAGAVGPKAA) the composition is skewed to low complexity. 2 stretches are compositionally biased toward basic and acidic residues: residues 219–232 (GDNREMEQGVREAD) and 279–302 (GREEARTTPGREEARAILDGEEAR). Residues 312–330 (TASGGEEAETASGGEEAGT) show a composition bias toward low complexity. A compositionally biased stretch (gly residues) spans 331–362 (ASGGEEAGIASGGEAGTASGGEEAGTASGGEE). At S458 the chain carries Phosphoserine. Basic and acidic residues-rich tracts occupy residues 463-487 (VDLRGKEAEMRQDLGIRADRARMEE) and 496-505 (EERGSSRDPV). S510 bears the Phosphoserine mark. T572 is modified (phosphothreonine). The residue at position 594 (S594) is a Phosphoserine. Basic and acidic residues-rich tracts occupy residues 594-606 (SKEEQERSLEAGP) and 626-637 (NRTRKDMERGNT). The segment covering 640 to 652 (DAADGEQREEEET) has biased composition (acidic residues). 3 stretches are compositionally biased toward basic and acidic residues: residues 791–800 (DSKEKEEAAA), 892–918 (QEREQREDSEGRCGDYHPEGEAPRLLD), and 928–950 (RRAEAKETEPESLEHVRGQEEQP). A compositionally biased stretch (basic residues) spans 1000–1017 (SRVHLSRSSSQRRSRPSF). Residues 1041–1050 (APEQRPLQLE) are compositionally biased toward low complexity.

Homodimer. There are 2 forms in macrophages, the membrane-binding proteins 200 kDa (MBP 200) and 235 kDa (MBP 235), that can be reduced into a single active ligand-binding species with intermediate mobility (MBP 200R). In terms of tissue distribution, expressed in peripheral blood leukocytes &gt; bone marrow = spleen &gt; lymph node, and only faintly visible in appendix and thymus. Expressed in the brain, heart, kidney, liver, lung, pancreas, and placenta. Expressed primarily by reticuloendothelial cells: monocytes, macrophages, and endothelial cells. Expressed in atherosclerotic lesion foam cells.

The protein resides in the cell membrane. Its function is as follows. Macrophage receptor that binds to the apolipoprotein B48 (APOB) of dietary triglyceride (TG)-rich lipoproteins (TRL) or to a like domain of APOB in hypertriglyceridemic very low density lipoprotein (HTG-VLDL). Binds and internalizes TRL when out of the context of the macrophage. May provide essential lipids to reticuloendothelial cells. Could also be involved in foam cell formation with elevated TRL and remnant lipoprotein (RLP). Mediates the rapid high-affinity uptake of chylomicrons (CM), HTG-VLDL, and trypsinized (tryp) VLDL devoid of APOE in vitro in macrophages. This chain is Apolipoprotein B receptor, found in Homo sapiens (Human).